A 183-amino-acid chain; its full sequence is Streptavidin-V1 (183 aa).

Positions M1–A24 are cleaved as a signal peptide. The Avidin-like domain occupies A37–P159. Residues Y67 and Y78 each coordinate biotin. The Cell attachment site; atypical motif lies at R83–D85. The biotin site is built by W116, W132, and W144.

Belongs to the avidin/streptavidin family. Homotetramer.

It is found in the secreted. In terms of biological role, the biological function of streptavidin is not known. Forms a strong non-covalent specific complex with biotin (one molecule of biotin per subunit of streptavidin). The sequence is that of Streptavidin-V1 from Streptomyces violaceus (Streptomyces venezuelae).